Here is a 154-residue protein sequence, read N- to C-terminus: Insulin-like growth factor 1 (154 aa).

The b stretch occupies residues 50 to 78 (GPETLCGAELVDALQFVCGDRGFYFNKPT). Intrachain disulfides connect C55/C97, C67/C110, and C96/C101. A c region spans residues 79 to 90 (GYGSSSRRAPQT). The tract at residues 91–111 (GIVDECCFRSCDLRRLEMYCA) is a. The segment at 112-119 (PLKAAKSA) is d. The propeptide at 120 to 154 (RSVRAQRHTDMPKAQKEVHLKNTSRGSAGNKNYRM) is e peptide. Residues 121–154 (SVRAQRHTDMPKAQKEVHLKNTSRGSAGNKNYRM) are disordered. Residues 126 to 139 (RHTDMPKAQKEVHL) show a composition bias toward basic and acidic residues. Residues 140-154 (KNTSRGSAGNKNYRM) are compositionally biased toward polar residues.

This sequence belongs to the insulin family. As to quaternary structure, forms a ternary complex with IGFR1 and ITGAV:ITGB3. Forms a ternary complex with IGFR1 and ITGA6:ITGB4. Forms a ternary complex with IGFBP3 and ALS.

It is found in the secreted. In terms of biological role, the insulin-like growth factors, isolated from plasma, are structurally and functionally related to insulin but have a much higher growth-promoting activity. May be a physiological regulator of [1-14C]-2-deoxy-D-glucose (2DG) transport and glycogen synthesis in osteoblasts. Stimulates glucose transport in bone-derived osteoblastic (PyMS) cells and is effective at much lower concentrations than insulin, not only regarding glycogen and DNA synthesis but also with regard to enhancing glucose uptake. May play a role in synapse maturation. Ca(2+)-dependent exocytosis of IGF1 is required for sensory perception of smell in the olfactory bulb. Acts as a ligand for IGF1R. Binds to the alpha subunit of IGF1R, leading to the activation of the intrinsic tyrosine kinase activity which autophosphorylates tyrosine residues in the beta subunit thus initiating a cascade of down-stream signaling events leading to activation of the PI3K-AKT/PKB and the Ras-MAPK pathways. Binds to integrins ITGAV:ITGB3 and ITGA6:ITGB4. Its binding to integrins and subsequent ternary complex formation with integrins and IGFR1 are essential for IGF1 signaling. Induces the phosphorylation and activation of IGFR1, MAPK3/ERK1, MAPK1/ERK2 and AKT1. As part of the MAPK/ERK signaling pathway, acts as a negative regulator of apoptosis in cardiomyocytes via promotion of STUB1/CHIP-mediated ubiquitination and degradation of ICER-type isoforms of CREM. The protein is Insulin-like growth factor 1 of Ovis aries (Sheep).